The primary structure comprises 313 residues: Protein FixB (313 aa).

Residue 255-283 (LYLAVGISGQIQHMVGANASQTIFAINKD) coordinates FAD.

It belongs to the ETF alpha-subunit/FixB family. In terms of assembly, heterodimer of FixA and FixB.

It functions in the pathway amine and polyamine metabolism; carnitine metabolism. Its function is as follows. Required for anaerobic carnitine reduction. May bring reductant to CaiA. The chain is Protein FixB from Escherichia coli (strain SMS-3-5 / SECEC).